A 234-amino-acid polypeptide reads, in one-letter code: Peptidase E (234 aa).

Active-site charge relay system residues include serine 123, aspartate 138, and histidine 160.

It belongs to the peptidase S51 family.

The protein localises to the cytoplasm. It catalyses the reaction Dipeptidase E catalyzes the hydrolysis of dipeptides Asp-|-Xaa. It does not act on peptides with N-terminal Glu, Asn or Gln, nor does it cleave isoaspartyl peptides.. Hydrolyzes dipeptides containing N-terminal aspartate residues. May play a role in allowing the cell to use peptide aspartate to spare carbon otherwise required for the synthesis of the aspartate family of amino acids. The protein is Peptidase E of Haemophilus influenzae (strain PittGG).